The sequence spans 629 residues: LEAF RUST 10 DISEASE-RESISTANCE LOCUS RECEPTOR-LIKE PROTEIN KINASE-like 1.1 (629 aa).

Residues 1-19 (METVSVLLFFFLFLLAAEA) form the signal peptide. Residues 20 to 225 (RSTKRTGCKD…PNNYHAEMRL (206 aa)) lie on the Extracellular side of the membrane. Residues asparagine 56, asparagine 92, asparagine 123, asparagine 124, asparagine 172, and asparagine 177 are each glycosylated (N-linked (GlcNAc...) asparagine). The chain crosses the membrane as a helical span at residues 226-246 (GLGIGGSVILIIILVALFAVI). The Cytoplasmic portion of the chain corresponds to 247-629 (HRNYRRKDGS…TTPNTSAYEF (383 aa)). The Protein kinase domain occupies 291–565 (FSKDRLLGDG…TMEQVVHELK (275 aa)). Residues 297-305 (LGDGGFGTV) and lysine 319 contribute to the ATP site. Tyrosine 365 is modified (phosphotyrosine). The Proton acceptor role is filled by aspartate 416. At serine 449 the chain carries Phosphoserine. Phosphothreonine is present on residues threonine 450 and threonine 455. Residue tyrosine 463 is modified to Phosphotyrosine. Residues 609 to 629 (VSVTDQWTSKSTTPNTSAYEF) are disordered.

The protein belongs to the protein kinase superfamily. Ser/Thr protein kinase family.

It localises to the cell membrane. It carries out the reaction L-seryl-[protein] + ATP = O-phospho-L-seryl-[protein] + ADP + H(+). It catalyses the reaction L-threonyl-[protein] + ATP = O-phospho-L-threonyl-[protein] + ADP + H(+). This is LEAF RUST 10 DISEASE-RESISTANCE LOCUS RECEPTOR-LIKE PROTEIN KINASE-like 1.1 from Arabidopsis thaliana (Mouse-ear cress).